Consider the following 79-residue polypeptide: Quinohemoprotein amine dehydrogenase subunit gamma (79 aa).

The segment at residues 7–16 is a cross-link (4-cysteinyl-glutamic acid (Cys-Glu)); that stretch reads CTATTDPGWE. Cross-links (3-cysteinyl-aspartic acid (Cys-Asp)) lie at residues 27-33 and 41-49; these read CQPMEAD and CWWPAQVPD. Residue Asp-33 is the Proton acceptor of the active site. The 4'-cysteinyl-tryptophylquinone (Cys-Trp) cross-link spans 37 to 43; that stretch reads CSDPCWW. Trp-43 carries the post-translational modification Tryptophylquinone.

This sequence belongs to the quinohemoprotein amine dehydrogenase subunit gamma family. Heterotrimer of an alpha, a beta and a gamma subunit. Requires cysteine tryptophylquinone residue as cofactor. In terms of processing, the cysteine tryptophylquinone (CTQ) is generated by oxidation of the indole ring of a tryptophan residue to form tryptophylquinone, followed by covalent cross-linking with a cysteine residue.

It is found in the periplasm. It carries out the reaction an aliphatic amine + A + H2O = an aldehyde + AH2 + NH4(+). Catalyzes the oxidative deamination of a wide range of aliphatic monoamines and diamines. The physiological electron acceptor is an azurin-like blue protein. The sequence is that of Quinohemoprotein amine dehydrogenase subunit gamma (qhnDH) from Pseudomonas putida (strain ATCC 47054 / DSM 6125 / CFBP 8728 / NCIMB 11950 / KT2440).